Consider the following 390-residue polypeptide: Transaldolase (390 aa).

Lys-135 acts as the Schiff-base intermediate with substrate in catalysis. EF-hand domains are found at residues 329–364 (AFCH…FDAL) and 365–388 (DHDH…LALT). Ca(2+) contacts are provided by Asp-342, Asp-344, Asp-346, Cys-348, Glu-353, Asp-365, Asp-367, Asp-369, Arg-371, and Asp-376.

It belongs to the transaldolase family. Type 1 subfamily.

It is found in the cytoplasm. It carries out the reaction D-sedoheptulose 7-phosphate + D-glyceraldehyde 3-phosphate = D-erythrose 4-phosphate + beta-D-fructose 6-phosphate. It participates in carbohydrate degradation; pentose phosphate pathway; D-glyceraldehyde 3-phosphate and beta-D-fructose 6-phosphate from D-ribose 5-phosphate and D-xylulose 5-phosphate (non-oxidative stage): step 2/3. In terms of biological role, transaldolase is important for the balance of metabolites in the pentose-phosphate pathway. The protein is Transaldolase of Prochlorococcus marinus (strain MIT 9313).